A 232-amino-acid chain; its full sequence is Orotidine 5'-phosphate decarboxylase (232 aa).

Residues aspartate 13, lysine 35, 62–71, threonine 122, arginine 182, glutamine 191, glycine 211, and arginine 212 contribute to the substrate site; that span reads DLKFHDIPNT. Lysine 64 (proton donor) is an active-site residue.

The protein belongs to the OMP decarboxylase family. Type 1 subfamily. Homodimer.

It carries out the reaction orotidine 5'-phosphate + H(+) = UMP + CO2. It participates in pyrimidine metabolism; UMP biosynthesis via de novo pathway; UMP from orotate: step 2/2. Catalyzes the decarboxylation of orotidine 5'-monophosphate (OMP) to uridine 5'-monophosphate (UMP). This Pseudomonas syringae pv. syringae (strain B728a) protein is Orotidine 5'-phosphate decarboxylase.